We begin with the raw amino-acid sequence, 439 residues long: Fibroleukin (439 aa).

The first 23 residues, 1–23 (MKLANWYWLSSAVLATYGFLVVA), serve as a signal peptide directing secretion. N25 carries an N-linked (GlcNAc...) asparagine glycan. The stretch at 73–165 (SRIEEVFKEV…GRLEKLNLVN (93 aa)) forms a coiled coil. The tract at residues 103-126 (ADDNGDPGRNGLLLPSTGAPGEVG) is disordered. N-linked (GlcNAc...) asparagine glycosylation is found at N179, N235, N263, and N336. In terms of domain architecture, Fibrinogen C-terminal spans 204–436 (PVQHLIYKDC…EAKMMIRPKH (233 aa)). Residues C213 and C242 are joined by a disulfide bond. C371 and C384 form a disulfide bridge.

In terms of assembly, homotetramer; disulfide-linked. Constitutively expressed in cytotoxic T-cells.

The protein localises to the secreted. Functionally, may play a role in physiologic lymphocyte functions at mucosal sites. In Homo sapiens (Human), this protein is Fibroleukin (FGL2).